Consider the following 530-residue polypeptide: UPF0422 protein lpl2888 (530 aa).

The N-terminal stretch at 1 to 19 (MKFKKIILALACLSSPLYA) is a signal peptide. A coiled-coil region spans residues 20–66 (DQDQQLKSEIQRLQHQAEDLQAQLNRLQKQLANHKSSQQKHEQQAAT). The segment at 50–81 (LANHKSSQQKHEQQAATKPAEPQSKPTVKSGA) is disordered.

This sequence belongs to the UPF0422 family.

The sequence is that of UPF0422 protein lpl2888 from Legionella pneumophila (strain Lens).